Reading from the N-terminus, the 285-residue chain is uncharacterized protein (285 aa).

Residues 1-25 (MVKKWLIQFAVMLSVLSTFTYSASA) form the signal peptide.

This is an uncharacterized protein from Bacillus subtilis (strain 168).